Reading from the N-terminus, the 215-residue chain is Oligoribonuclease (215 aa).

The Exonuclease domain maps to 5-170 (LVWIDCEMTG…ADIHESIREL (166 aa)). Residue Y127 is part of the active site.

It belongs to the oligoribonuclease family.

The protein resides in the cytoplasm. 3'-to-5' exoribonuclease specific for small oligoribonucleotides. This is Oligoribonuclease from Mycobacterium leprae (strain TN).